The sequence spans 589 residues: 2-succinyl-5-enolpyruvyl-6-hydroxy-3-cyclohexene-1-carboxylate synthase (589 aa).

This sequence belongs to the TPP enzyme family. MenD subfamily. Homodimer. Mg(2+) is required as a cofactor. Mn(2+) serves as cofactor. Requires thiamine diphosphate as cofactor.

The enzyme catalyses isochorismate + 2-oxoglutarate + H(+) = 5-enolpyruvoyl-6-hydroxy-2-succinyl-cyclohex-3-ene-1-carboxylate + CO2. Its pathway is quinol/quinone metabolism; 1,4-dihydroxy-2-naphthoate biosynthesis; 1,4-dihydroxy-2-naphthoate from chorismate: step 2/7. It participates in quinol/quinone metabolism; menaquinone biosynthesis. Its function is as follows. Catalyzes the thiamine diphosphate-dependent decarboxylation of 2-oxoglutarate and the subsequent addition of the resulting succinic semialdehyde-thiamine pyrophosphate anion to isochorismate to yield 2-succinyl-5-enolpyruvyl-6-hydroxy-3-cyclohexene-1-carboxylate (SEPHCHC). This is 2-succinyl-5-enolpyruvyl-6-hydroxy-3-cyclohexene-1-carboxylate synthase from Myxococcus xanthus (strain DK1622).